The primary structure comprises 191 residues: MSQDQVLDIFRNSEALLEGHFRLTSGRHSNRYVQCAQVLQHPPYTERLSRHLAALLRKGVGLPDVVIGPAMGGILVAYEVGRALGVRAIFTEREKGLMTLRRNFVVRPGETVVVCEDVVTTGGSVREVIDVATAAGGRVAAVAALVDRSNGQVDFGVPFFAALSMEVLSWPPEECPLCKEGTPAIKPGSRT.

116–124 (EDVVTTGGS) is a 5-phospho-alpha-D-ribose 1-diphosphate binding site. Residues Thr120 and Arg148 each coordinate orotate.

Belongs to the purine/pyrimidine phosphoribosyltransferase family. PyrE subfamily. Homodimer. The cofactor is Mg(2+).

The catalysed reaction is orotidine 5'-phosphate + diphosphate = orotate + 5-phospho-alpha-D-ribose 1-diphosphate. It functions in the pathway pyrimidine metabolism; UMP biosynthesis via de novo pathway; UMP from orotate: step 1/2. Functionally, catalyzes the transfer of a ribosyl phosphate group from 5-phosphoribose 1-diphosphate to orotate, leading to the formation of orotidine monophosphate (OMP). The protein is Orotate phosphoribosyltransferase of Heliobacterium modesticaldum (strain ATCC 51547 / Ice1).